The chain runs to 110 residues: MLKYVVTDIGKMCLYIWPYRVWSWRRLFIFRVLNVVSIAILFETPHRLALVPNVCLYTHMAIPLSTCLFCLCLCICIKYDITQTQANNQFLASFFVLILTINDLDVTFVI.

Transmembrane regions (helical) follow at residues valine 32 to proline 52, tyrosine 57 to isoleucine 77, and phenylalanine 90 to isoleucine 110.

The protein resides in the membrane. Functionally, may play a role in proper chromosome segregation. Suppresses the high-frequency loss of mini-chromosomes when overexpressed, and this suppression is completely dependent on silencing protein SIR4. This is an uncharacterized protein from Saccharomyces cerevisiae (strain ATCC 204508 / S288c) (Baker's yeast).